A 90-amino-acid polypeptide reads, in one-letter code: Phenol 2-monooxygenase, stimulatory component DmpM (90 aa).

This sequence belongs to the TmoD/XamoD family. Active as a monomer. Formation of dimers inactivates the protein. The multicomponent enzyme phenol hydroxylase is formed by DmpL (P1 component), DmpM (P2 component), DmpN (P3 component), DmpO (P4 component) and DmpP (P5 component).

It catalyses the reaction phenol + NADH + O2 + H(+) = catechol + NAD(+) + H2O. The protein operates within aromatic compound metabolism; phenol degradation. Its function is as follows. Part of a multicomponent enzyme which catalyzes the degradation of phenol and some of its methylated derivatives. DmpM is a regulatory subunit that stimulates the phenol hydroxylase activity of the complex. The steady-state rate of phenol hydroxylase turnover is dependent on the DmpM concentration, with a maximum observed rate at about 1.5 DmpM per oxygenase monomer. Higher concentrations of DmpM inhibit phenol hydroxylase activity. May act by altering the redox potential of the oxygenase. Required for growth on phenol and for in vitro phenol hydroxylase activity. The sequence is that of Phenol 2-monooxygenase, stimulatory component DmpM from Pseudomonas sp. (strain CF600).